A 304-amino-acid polypeptide reads, in one-letter code: Phosphoribosylaminoimidazole-succinocarboxamide synthase (304 aa).

Belongs to the SAICAR synthetase family.

The catalysed reaction is 5-amino-1-(5-phospho-D-ribosyl)imidazole-4-carboxylate + L-aspartate + ATP = (2S)-2-[5-amino-1-(5-phospho-beta-D-ribosyl)imidazole-4-carboxamido]succinate + ADP + phosphate + 2 H(+). It functions in the pathway purine metabolism; IMP biosynthesis via de novo pathway; 5-amino-1-(5-phospho-D-ribosyl)imidazole-4-carboxamide from 5-amino-1-(5-phospho-D-ribosyl)imidazole-4-carboxylate: step 1/2. The protein is Phosphoribosylaminoimidazole-succinocarboxamide synthase of Streptomyces griseus subsp. griseus (strain JCM 4626 / CBS 651.72 / NBRC 13350 / KCC S-0626 / ISP 5235).